The chain runs to 887 residues: MFKQLSQFGKNITDELAKGINEDTASEGQHGAGAQGGRREEGGSPYEELPKEIQAKLRKFEKYEQKYPLLLNAYKAEKEKSDEVELLLKVLSENTPVSAIGDVETLRGFFEDVGVKTAMLTEEIKRITGENNGLQKQLAEAQESLEQRQRDLTSREEELAKSSREATELRELRQQAVAEKDAAVTERDDAQKAAAEMETRCTEAEAHAAEMKSQIESMETELKRTEKLLTTYKSTIQELGASQATGEAQPSSEAPSVRGKKGKGKRGKGKKRVQAADEKADTSSELELGEEKTPSTSSAGDEIIEAIETKQKYENLVEEHQQLSLELEKSRHWEQECLDSRKKVETLETELKDVKAKLKNSNEELETVRGMLKTVGNELVHARDELKQLNCEGTNEVERLKSELQELRTENSTQIATLKEQLQLLNDQKKALETDVEQHKRKMEDLESELLKSQENVSKFRNQNNDLSEKLRDYIVLKKSEATTRMSLSQKEKTIEYLEEQVRQYNSKEIEDKKAFADSKTELERWQRTAANLEKQLERIRLETKRHDDNLESYIKENGKLSERLEVLQEKYDSLQNLKSNSGDQVSAIRKQCEELNSKLKEATKRVMSLEDELNETSTVLQERTREATTMRRMINSDRSSKDTKIRELEDRVAAASEERDKLKSELDVLLARKNHETQDLKNTNQELVVKINALELKEQELATEVQQLKVLNQTIRRHSSTAADGSEELELTVRKLKDSLRTSEKKMRELKDSNEELKSLNDELNAKLDRLANRYKVLSTQLKMSKDMSSQSRHSSRSGSLVSPSSDNETGNSPRKISISSAHPAPVVASYDNSAEMESNEKLAYIRNVLLGFLEHREQRSQLLPVVSTLLQLSSHDEKRLLTSLK.

4 disordered regions span residues 16-50, 142-214, 240-301, and 783-822; these read LAKG…EELP, QESL…MKSQ, GASQ…SAGD, and LKMS…SISS. Composition is skewed to basic and acidic residues over residues 37-50 and 145-210; these read GRRE…EELP and LEQR…HAAE. A coiled-coil region spans residues 118 to 241; that stretch reads AMLTEEIKRI…YKSTIQELGA (124 aa). A compositionally biased stretch (polar residues) spans 240-254; it reads GASQATGEAQPSSEA. Over residues 258 to 273 the composition is skewed to basic residues; sequence RGKKGKGKRGKGKKRV. Positions 299–788 form a coiled coil; it reads AGDEIIEAIE…LSTQLKMSKD (490 aa). Over residues 788–807 the composition is skewed to low complexity; that stretch reads DMSSQSRHSSRSGSLVSPSS. The span at 808 to 822 shows a compositional bias: polar residues; the sequence is DNETGNSPRKISISS. In terms of domain architecture, GRIP spans 837-885; sequence EMESNEKLAYIRNVLLGFLEHREQRSQLLPVVSTLLQLSSHDEKRLLTS.

Its subcellular location is the cytoplasm. The protein localises to the golgi apparatus membrane. Its function is as follows. Involved in vesicular transport between an endosomal compartment and the Golgi apparatus. This Eremothecium gossypii (strain ATCC 10895 / CBS 109.51 / FGSC 9923 / NRRL Y-1056) (Yeast) protein is Golgin IMH1 (IMH1).